Consider the following 483-residue polypeptide: MGFTLAIVGRPNVGKSTLFNRLVGRKLALVDDLPGVTRDRRIHDAKLYDLKFQVIDTAGLEEAANDSLEARMRAQTEAAISEADAVLFVIDAKAGITPADSTFAEAVRRSGKPVVLVANKAEARGSEAGMYDAFQLGLGEPCPISAEHGQGMPDLRDAIVELLGEERVFAEERQEEAADEVFTPAAVGALVGDDIEDPDAEEIPAYDATKPLRIAIVGRPNAGKSTLINTMLGEDRLLTGPEAGITRDSISADWEWHGRKINLFDTAGMRRKARVQEKLEKLSVADSLRAIRFAEVVIIVLDATIPFEKQDLQIADLIIREGRAPVIAFNKWDLIEDRQMVLADLYEKTARLLPQVRGLRAVPISGERGQGIDKLMENVVKTHEIWNRRISTGRLNRWLEGVIAHQPPPAVSGRRLKVKYMTQVKTRPPGFVVSCSRPDAMPQSYVRYLINGLRETFDMPGVPIRLSLRTSDNPFAGRAKKKK.

2 EngA-type G domains span residues 3–167 (FTLA…GEER) and 212–387 (LRIA…EIWN). GTP-binding positions include 9–16 (GRPNVGKS), 56–60 (DTAGL), 119–122 (NKAE), 218–225 (GRPNAGKS), 265–269 (DTAGM), and 330–333 (NKWD). The region spanning 388-472 (RRISTGRLNR…PIRLSLRTSD (85 aa)) is the KH-like domain.

It belongs to the TRAFAC class TrmE-Era-EngA-EngB-Septin-like GTPase superfamily. EngA (Der) GTPase family. In terms of assembly, associates with the 50S ribosomal subunit.

Its function is as follows. GTPase that plays an essential role in the late steps of ribosome biogenesis. This chain is GTPase Der, found in Brucella abortus (strain 2308).